A 615-amino-acid chain; its full sequence is Crinkler effector protein 15 (615 aa).

The first 17 residues, Met-1 to Pro-17, serve as a signal peptide directing secretion. The interval Val-18 to Lys-54 is LQLFLAK domain. Residues Gln-55–Ile-136 are DWL domain. The HVLVXXP motif motif lies at His-137–Pro-143. Asn-531 is a glycosylation site (N-linked (GlcNAc...) asparagine).

It belongs to the Crinkler effector family.

The protein resides in the secreted. It localises to the host nucleus. In terms of biological role, secreted effector that elicits necrosis in host plants, a characteristic of plant innate immunity. The chain is Crinkler effector protein 15 from Phytophthora infestans (Potato late blight agent).